A 150-amino-acid polypeptide reads, in one-letter code: uncharacterized protein (150 aa).

This is an uncharacterized protein from Acidianus bottle-shaped virus (isolate Italy/Pozzuoli) (ABV).